The sequence spans 277 residues: Undecaprenyl-diphosphatase (277 aa).

Helical transmembrane passes span 11 to 31 (WWQA…PISS), 47 to 67 (AGAS…LIYF), 96 to 116 (VGIL…KAIW), 123 to 143 (LWVI…AEQT), 153 to 173 (LGIW…IPGV), 197 to 217 (SFLL…ISEF), 227 to 247 (LGTL…IQFL), and 254 to 274 (LFIV…ALGF).

The protein belongs to the UppP family.

Its subcellular location is the cell inner membrane. The enzyme catalyses di-trans,octa-cis-undecaprenyl diphosphate + H2O = di-trans,octa-cis-undecaprenyl phosphate + phosphate + H(+). Functionally, catalyzes the dephosphorylation of undecaprenyl diphosphate (UPP). Confers resistance to bacitracin. The polypeptide is Undecaprenyl-diphosphatase (Synechococcus sp. (strain JA-2-3B'a(2-13)) (Cyanobacteria bacterium Yellowstone B-Prime)).